We begin with the raw amino-acid sequence, 179 residues long: Acireductone dioxygenase (179 aa).

Fe(2+)-binding residues include His-97, His-99, Glu-103, and His-141. The Ni(2+) site is built by His-97, His-99, Glu-103, and His-141.

This sequence belongs to the acireductone dioxygenase (ARD) family. Monomer. Fe(2+) serves as cofactor. Requires Ni(2+) as cofactor.

It catalyses the reaction 1,2-dihydroxy-5-(methylsulfanyl)pent-1-en-3-one + O2 = 3-(methylsulfanyl)propanoate + CO + formate + 2 H(+). The enzyme catalyses 1,2-dihydroxy-5-(methylsulfanyl)pent-1-en-3-one + O2 = 4-methylsulfanyl-2-oxobutanoate + formate + 2 H(+). The protein operates within amino-acid biosynthesis; L-methionine biosynthesis via salvage pathway; L-methionine from S-methyl-5-thio-alpha-D-ribose 1-phosphate: step 5/6. Catalyzes 2 different reactions between oxygen and the acireductone 1,2-dihydroxy-3-keto-5-methylthiopentene (DHK-MTPene) depending upon the metal bound in the active site. Fe-containing acireductone dioxygenase (Fe-ARD) produces formate and 2-keto-4-methylthiobutyrate (KMTB), the alpha-ketoacid precursor of methionine in the methionine recycle pathway. Ni-containing acireductone dioxygenase (Ni-ARD) produces methylthiopropionate, carbon monoxide and formate, and does not lie on the methionine recycle pathway. The polypeptide is Acireductone dioxygenase (Granulibacter bethesdensis (strain ATCC BAA-1260 / CGDNIH1)).